We begin with the raw amino-acid sequence, 526 residues long: Keratin, type I cytoskeletal 10 (526 aa).

Residues 1 to 16 are compositionally biased toward low complexity; the sequence is MSVRFSSNSRQYSSAR. Positions 1–40 are disordered; the sequence is MSVRFSSNSRQYSSARSGGGGGGGGGGSSIRVSSTKSSLG. A head region spans residues 1–144; sequence MSVRFSSNSR…GDGGGLLSGN (144 aa). Phosphoserine is present on residues S17, S38, S49, S52, and S169. The span at 17-28 shows a compositional bias: gly residues; it reads SGGGGGGGGGGS. A coil 1A region spans residues 145–180; sequence EKVTMQNLNDRLASYMNKVRDLEESNYELEGKIKEW. Positions 145-459 constitute an IF rod domain; the sequence is EKVTMQNLND…SLLEGEGGYV (315 aa). The interval 181-201 is linker 1; it reads YEKHGNSSQREPRDYSKYYKT. The tract at residues 202-293 is coil 1B; that stretch reads IEDLKGQIVN…KNHEEEMKDL (92 aa). Positions 294-316 are linker 12; the sequence is QNVSTGDVNVEMNAAPGVDLTQL. The tract at residues 317 to 455 is coil 2; that stretch reads LNNMRNQYEQ…QTYRSLLEGE (139 aa). Positions 456–526 are tail; that stretch reads GGYVGNLQIT…IESETKKHFY (71 aa).

Belongs to the intermediate filament family. Heterotetramer of two type I and two type II keratins. Heterodimer with KRT1. Two heterodimers of KRT1 and KRT10 form a heterotetramer. The KRT10 subunit in the heterotetramer is probably disulfide-linked.

The protein resides in the secreted. Its subcellular location is the extracellular space. It localises to the cell surface. The protein localises to the cytoplasm. Its function is as follows. Plays a role in the establishment of the epidermal barrier on plantar skin. Involved in the maintenance of cell layer development and keratin filament bundles in suprabasal cells of the epithelium. This chain is Keratin, type I cytoskeletal 10, found in Rattus norvegicus (Rat).